The sequence spans 246 residues: tRNA pseudouridine synthase B (246 aa).

Asp-44 functions as the Nucleophile in the catalytic mechanism.

This sequence belongs to the pseudouridine synthase TruB family. Type 1 subfamily.

The catalysed reaction is uridine(55) in tRNA = pseudouridine(55) in tRNA. Its function is as follows. Responsible for synthesis of pseudouridine from uracil-55 in the psi GC loop of transfer RNAs. This is tRNA pseudouridine synthase B from Desulfotalea psychrophila (strain LSv54 / DSM 12343).